The primary structure comprises 134 residues: MATTFSASVSMQATSLATTTRISFQKPVLVSNHGRTNLSFNLSRTRLSISCAAKQETVEKVSEIVKKQLSLKDDQQVVAETKFVDLGADSLDTVEIVMGLEEEFGIQMAEEKAQKIATVEQAAELIEELMQAKK.

A chloroplast-targeting transit peptide spans 1–51 (MATTFSASVSMQATSLATTTRISFQKPVLVSNHGRTNLSFNLSRTRLSISC). The Carrier domain occupies 55–130 (QETVEKVSEI…QAAELIEELM (76 aa)). O-(pantetheine 4'-phosphoryl)serine is present on Ser-90.

Belongs to the acyl carrier protein (ACP) family. Post-translationally, 4'-phosphopantetheine is transferred from CoA to a specific serine of apo-ACP by acpS. This modification is essential for activity because fatty acids are bound in thioester linkage to the sulfhydryl of the prosthetic group. As to expression, seed.

The protein resides in the plastid. It is found in the chloroplast. It participates in lipid metabolism; fatty acid biosynthesis. Carrier of the growing fatty acid chain in fatty acid biosynthesis. In Brassica napus (Rape), this protein is Acyl carrier protein, chloroplastic (ACL1.C1).